Reading from the N-terminus, the 946-residue chain is Inter-alpha-trypsin inhibitor heavy chain H2 (946 aa).

A signal peptide spans 1-18 (MQRLACVLIWLFLLEEQA). A propeptide spanning residues 19–54 (FEIPANEYSEFAGYSNLVELAPDKFPFVQENRRYQR) is cleaved from the precursor. In terms of domain architecture, VIT spans 56 to 185 (LPEESGEMTD…KVQFELHYQE (130 aa)). Serine 60 carries the phosphoserine modification. N-linked (GlcNAc...) asparagine glycosylation is found at asparagine 118 and asparagine 263. 4-carboxyglutamate occurs at positions 282 and 283. The region spanning 308–468 (PKNILFVIDV…YDFLKRLSNE (161 aa)) is the VWFA domain. The N-linked (GlcNAc...) asparagine glycan is linked to asparagine 445. The residue at position 466 (serine 466) is a Phosphoserine. Residue asparagine 578 is glycosylated (N-linked (GlcNAc...) asparagine). Aspartate 702 bears the Aspartate 1-(chondroitin 4-sulfate)-ester mark. Positions 703 to 946 (PHFIIYLPKS…PQLYSFLKRP (244 aa)) are excised as a propeptide. Serine 886 carries the phosphoserine modification.

The protein belongs to the ITIH family. In terms of assembly, I-alpha-I plasma protease inhibitors are assembled from one or two heavy chains (HC) and one light chain, bikunin. Inter-alpha-inhibitor (I-alpha-I) is composed of ITIH1/HC1, ITIH2/HC2 and bikunin. Heavy chains are linked to bikunin via chondroitin 4-sulfate esterified to the alpha-carboxyl of the C-terminal aspartate after propeptide cleavage. Post-translationally, phosphorylated by FAM20C in the extracellular medium.

The protein localises to the secreted. May act as a carrier of hyaluronan in serum or as a binding protein between hyaluronan and other matrix protein, including those on cell surfaces in tissues to regulate the localization, synthesis and degradation of hyaluronan which are essential to cells undergoing biological processes. The protein is Inter-alpha-trypsin inhibitor heavy chain H2 (ITIH2) of Mesocricetus auratus (Golden hamster).